The following is a 156-amino-acid chain: Small ribosomal subunit protein uS7 (156 aa).

Belongs to the universal ribosomal protein uS7 family. In terms of assembly, part of the 30S ribosomal subunit. Contacts proteins S9 and S11.

Functionally, one of the primary rRNA binding proteins, it binds directly to 16S rRNA where it nucleates assembly of the head domain of the 30S subunit. Is located at the subunit interface close to the decoding center, probably blocks exit of the E-site tRNA. The protein is Small ribosomal subunit protein uS7 of Vibrio campbellii (strain ATCC BAA-1116).